Reading from the N-terminus, the 271-residue chain is Metal-staphylopine import system ATP-binding protein CntD (271 aa).

One can recognise an ABC transporter domain in the interval 6-251; that stretch reads VKHLTITDTW…PEHVYTKYLL (246 aa). 38-45 contacts ATP; that stretch reads GESGSGKS.

This sequence belongs to the ABC transporter superfamily. The complex is composed of two ATP-binding proteins (CntD and CntF), two transmembrane proteins (CntB and CntC) and a solute-binding protein (CntA).

Its subcellular location is the cell membrane. Its function is as follows. Part of the ABC transporter complex CntABCDF (Opp1) involved in the uptake of metal in complex with the metallophore staphylopine (StP). May be involved in the import of a large array of divalent metals ions such as nickel, cobalt, zinc, copper and iron. Probably responsible for energy coupling to the transport system. The sequence is that of Metal-staphylopine import system ATP-binding protein CntD from Staphylococcus aureus (strain Mu50 / ATCC 700699).